The sequence spans 178 residues: Peptide deformylase 2 (178 aa).

2 residues coordinate Fe cation: Cys-101 and His-143. Glu-144 is an active-site residue. His-147 serves as a coordination point for Fe cation.

This sequence belongs to the polypeptide deformylase family. Fe(2+) is required as a cofactor.

It carries out the reaction N-terminal N-formyl-L-methionyl-[peptide] + H2O = N-terminal L-methionyl-[peptide] + formate. Its function is as follows. Removes the formyl group from the N-terminal Met of newly synthesized proteins. Requires at least a dipeptide for an efficient rate of reaction. N-terminal L-methionine is a prerequisite for activity but the enzyme has broad specificity at other positions. This is Peptide deformylase 2 from Pseudomonas putida (strain ATCC 47054 / DSM 6125 / CFBP 8728 / NCIMB 11950 / KT2440).